Reading from the N-terminus, the 135-residue chain is Holo-[acyl-carrier-protein] synthase (135 aa).

Mg(2+) contacts are provided by D8 and E58.

It belongs to the P-Pant transferase superfamily. AcpS family. Mg(2+) is required as a cofactor.

Its subcellular location is the cytoplasm. It carries out the reaction apo-[ACP] + CoA = holo-[ACP] + adenosine 3',5'-bisphosphate + H(+). Functionally, transfers the 4'-phosphopantetheine moiety from coenzyme A to a Ser of acyl-carrier-protein. This chain is Holo-[acyl-carrier-protein] synthase, found in Leuconostoc citreum (strain KM20).